The following is a 389-amino-acid chain: Acetylornithine deacetylase (389 aa).

Zn(2+) is bound at residue His-85. The active site involves Asp-87. Residue Asp-117 participates in Zn(2+) binding. Glu-149 is an active-site residue. 3 residues coordinate Zn(2+): Glu-150, Glu-174, and His-360.

This sequence belongs to the peptidase M20A family. ArgE subfamily. As to quaternary structure, homodimer. It depends on Zn(2+) as a cofactor. The cofactor is Co(2+). Glutathione serves as cofactor.

Its subcellular location is the cytoplasm. The catalysed reaction is N(2)-acetyl-L-ornithine + H2O = L-ornithine + acetate. The protein operates within amino-acid biosynthesis; L-arginine biosynthesis; L-ornithine from N(2)-acetyl-L-ornithine (linear): step 1/1. In terms of biological role, catalyzes the hydrolysis of the amide bond of N(2)-acetylated L-amino acids. Cleaves the acetyl group from N-acetyl-L-ornithine to form L-ornithine, an intermediate in L-arginine biosynthesis pathway, and a branchpoint in the synthesis of polyamines. This chain is Acetylornithine deacetylase, found in Yersinia pseudotuberculosis serotype O:1b (strain IP 31758).